A 266-amino-acid polypeptide reads, in one-letter code: Gasdermin bGSDM (266 aa).

A run of 4 beta stranded transmembrane segments spans residues leucine 67–isoleucine 83, lysine 95–glutamine 113, serine 162–alanine 179, and alanine 187–tyrosine 203.

The protein belongs to the bacterial gasdermin family. As to quaternary structure, monomer. In terms of assembly, forms large, homooligomeric ring-shaped pores when inserted in membranes.

It is found in the cytoplasm. The protein localises to the cell inner membrane. Its activity is regulated as follows. The full-length protein before cleavage is inactive: intramolecular interactions between the N-terminal domain and the C-terminal region mediate autoinhibition. The pyroptosis-like-inducing activity is carried by the released N-terminal domain (Gasdermin bGSDM, N-terminus). Precursor of a pore-forming protein involved in defense against bacteriophages. Expression of bGSDM and the neighboring protease gene (Gilli_2517) is not toxic in E.coli. Cleavage of this precursor by its dedicated protease releases the active moiety (gasdermin bGSDM, N-terminus) which inserts into membranes, forming pores and triggering cell death. Functionally, pore-forming protein that causes membrane permeabilization via a pyroptosis-like activity. Makes ring-like pores when released. This is Gasdermin bGSDM from Gillisia limnaea (strain DSM 15749 / LMG 21470 / R-8282).